The primary structure comprises 794 residues: Zinc finger protein 148 (794 aa).

A Glycyl lysine isopeptide (Lys-Gly) (interchain with G-Cter in SUMO2) cross-link involves residue Lys-6. The residue at position 51 (Ser-51) is a Phosphoserine. Residues Lys-88, Lys-115, and Lys-132 each participate in a glycyl lysine isopeptide (Lys-Gly) (interchain with G-Cter in SUMO2) cross-link. The segment at 171-193 (HVCEHCNAAFRTNYHLQRHVFIH) adopts a C2H2-type 1 zinc-finger fold. Residue Thr-194 is modified to Phosphothreonine. 2 C2H2-type zinc fingers span residues 199–221 (FQCS…EKIH) and 227–249 (FRCD…KRTH). Ser-250 carries the post-translational modification Phosphoserine. The C2H2-type 4 zinc finger occupies 255–278 (YQCEYCLQYFSRTDRVLKHKRMCH). Lys-291 is covalently cross-linked (Glycyl lysine isopeptide (Lys-Gly) (interchain with G-Cter in SUMO2)). The disordered stretch occupies residues 298-336 (EEDSGFSTSPKDNSLPKKKRQKTEKKSSGMDKESVLDKS). Phosphoserine is present on residues Ser-301 and Ser-306. Lys-308 participates in a covalent cross-link: Glycyl lysine isopeptide (Lys-Gly) (interchain with G-Cter in SUMO2). Positions 321 to 336 (EKKSSGMDKESVLDKS) are enriched in basic and acidic residues. A Glycyl lysine isopeptide (Lys-Gly) (interchain with G-Cter in SUMO1); alternate cross-link involves residue Lys-356. A Glycyl lysine isopeptide (Lys-Gly) (interchain with G-Cter in SUMO2); alternate cross-link involves residue Lys-356. Residue Lys-402 forms a Glycyl lysine isopeptide (Lys-Gly) (interchain with G-Cter in SUMO2) linkage. Ser-412 is subject to Phosphoserine. Residues Lys-421 and Lys-424 each participate in a glycyl lysine isopeptide (Lys-Gly) (interchain with G-Cter in SUMO2) cross-link. Over residues 574–588 (NSSDVPEVTQSENVG) the composition is skewed to polar residues. The tract at residues 574–599 (NSSDVPEVTQSENVGSSSQASSSDKA) is disordered. The residue at position 607 (Lys-607) is an N6-acetyllysine. Residues Ser-665 and Ser-784 each carry the phosphoserine modification.

The protein belongs to the krueppel C2H2-type zinc-finger protein family. As to quaternary structure, interacts with HNRNPDL. Interacts with the 5FMC complex; the interaction requires association with CHTOP. Interacts with CAVIN1. Post-translationally, sumoylated with SUMO2. Desumoylated by SENP3, resulting in the stimulation of transcription of its target genes. In terms of tissue distribution, strong expression detected in brain, lung, liver and kidney, with lower levels detected in spleen, skeletal muscle, testis and heart.

The protein resides in the nucleus. Its function is as follows. Involved in transcriptional regulation. Represses the transcription of a number of genes including gastrin, stromelysin and enolase. Binds to the G-rich box in the enhancer region of these genes. The polypeptide is Zinc finger protein 148 (Znf148) (Mus musculus (Mouse)).